The primary structure comprises 182 residues: Large ribosomal subunit protein uL6 (182 aa).

It belongs to the universal ribosomal protein uL6 family. As to quaternary structure, part of the 50S ribosomal subunit.

Its function is as follows. This protein binds to the 23S rRNA, and is important in its secondary structure. It is located near the subunit interface in the base of the L7/L12 stalk, and near the tRNA binding site of the peptidyltransferase center. The protein is Large ribosomal subunit protein uL6 of Caldicellulosiruptor saccharolyticus (strain ATCC 43494 / DSM 8903 / Tp8T 6331).